A 470-amino-acid polypeptide reads, in one-letter code: GTPase Der (470 aa).

EngA-type G domains are found at residues 2 to 165 and 201 to 372; these read KTIA…GLEA and IRVG…ENFS. GTP contacts are provided by residues 8 to 15, 55 to 59, 117 to 120, 207 to 214, 254 to 258, and 318 to 321; these read GKPNVGKS, DTGGI, NKID, GKVNVGKS, DTAGI, and NKWD. One can recognise a KH-like domain in the interval 373–457; sequence RRIPTSILNK…PILIRARKRG (85 aa).

The protein belongs to the TRAFAC class TrmE-Era-EngA-EngB-Septin-like GTPase superfamily. EngA (Der) GTPase family. Associates with the 50S ribosomal subunit.

In terms of biological role, GTPase that plays an essential role in the late steps of ribosome biogenesis. The polypeptide is GTPase Der (Wolinella succinogenes (strain ATCC 29543 / DSM 1740 / CCUG 13145 / JCM 31913 / LMG 7466 / NCTC 11488 / FDC 602W) (Vibrio succinogenes)).